The chain runs to 366 residues: MATVGGAFKDSLTQAQKDELHQIALKIVQDGKGILAADESTGTIGKRLDAINLENNETNRQKYRQLLFTTPNLNQHISGVILYEETFHQSTDKGEKFTDLLIKQGIVPGIKLDLGVVPLAGTIGEGTTQGLDKLAERAAAFKKGGCGFAKWRCVLNIGTHTPSHLGMLENANVLARYASICQANGLVPIVEPEVLCDGEHDLARAQKVTEQVLAFVYKALADHHVYLEGTLLKPNMVTPGQSSASKASHEAIGLATVTALRRGVPAAVPGITFLSGGQSELDATANLNAINSVQLGKPWKLTFSYGRALQASVLKAWGGKDENIAAAQKTLLHRSKANGDASLGKYAGEDAAGAAAESLFVAKHSY.

Positions 60 and 150 each coordinate substrate. E191 acts as the Proton acceptor in catalysis. K233 (schiff-base intermediate with dihydroxyacetone-P) is an active-site residue.

The protein belongs to the class I fructose-bisphosphate aldolase family.

It catalyses the reaction beta-D-fructose 1,6-bisphosphate = D-glyceraldehyde 3-phosphate + dihydroxyacetone phosphate. It participates in carbohydrate degradation; glycolysis; D-glyceraldehyde 3-phosphate and glycerone phosphate from D-glucose: step 4/4. In Caenorhabditis elegans, this protein is Fructose-bisphosphate aldolase 2 (aldo-2).